The chain runs to 506 residues: Ecdysteroid UDP-glucosyltransferase (506 aa).

Positions 1–18 (MTILCWLALLSTLTAVNA) are cleaved as a signal peptide.

This sequence belongs to the UDP-glycosyltransferase family. Glycosylated.

In terms of biological role, catalyzes the transfer of glucose from UDP-glucose to ecdysteroids which are insect molting hormones. Acts on the host at the organismal level to block its development, thereby increasing the yield of progeny virus. This is Ecdysteroid UDP-glucosyltransferase (EGT) from Lepidoptera (butterflies and moths).